The sequence spans 84 residues: Hepcidin (84 aa).

The N-terminal stretch at 1-24 (MALSSQIWAACLLLLLLLASLTSG) is a signal peptide. The propeptide occupies 25–54 (SVFPQQTGQLAELQPQDRAGARASWMPMFQ). 4 cysteine pairs are disulfide-bonded: cysteine 66–cysteine 82, cysteine 69–cysteine 72, cysteine 70–cysteine 78, and cysteine 73–cysteine 81.

The protein belongs to the hepcidin family. As to quaternary structure, interacts with SLC40A1; this interaction promotes SLC40A1 rapid ubiquitination. As to expression, highest expression in liver and to a lesser extent in heart and brain. Low levels in lung, tonsils, salivary gland, trachea, prostate gland, adrenal gland and thyroid gland. Secreted into the urine and blood. Expressed by hepatocytes.

It is found in the secreted. Its function is as follows. Liver-produced hormone that constitutes the main circulating regulator of iron absorption and distribution across tissues. Acts by promoting endocytosis and degradation of ferroportin/SLC40A1, leading to the retention of iron in iron-exporting cells and decreased flow of iron into plasma. Controls the major flows of iron into plasma: absorption of dietary iron in the intestine, recycling of iron by macrophages, which phagocytose old erythrocytes and other cells, and mobilization of stored iron from hepatocytes. Functionally, has strong antimicrobial activity against E.coli ML35P N.cinerea and weaker against S.epidermidis, S.aureus and group b streptococcus bacteria. Active against the fungus C.albicans. No activity against P.aeruginosa. This is Hepcidin from Homo sapiens (Human).